The primary structure comprises 248 residues: Coenzyme F420:L-glutamate ligase (248 aa).

Residues 15–18, 45–46, and Lys-50 contribute to the GTP site; these read IPLI and ET. Residue Asp-115 participates in a divalent metal cation binding. GTP is bound at residue Asn-118. A divalent metal cation contacts are provided by Asp-155, Ser-156, and Gln-213. 211-218 provides a ligand contact to GTP; that stretch reads MGQSDEGI.

It belongs to the CofE family. As to quaternary structure, homodimer. The cofactor is Mg(2+). Requires Mn(2+) as cofactor. K(+) serves as cofactor.

It carries out the reaction oxidized coenzyme F420-0 + GTP + L-glutamate = oxidized coenzyme F420-1 + GDP + phosphate + H(+). The enzyme catalyses oxidized coenzyme F420-1 + GTP + L-glutamate = oxidized coenzyme F420-2 + GDP + phosphate + H(+). The protein operates within cofactor biosynthesis; coenzyme F420 biosynthesis. In terms of biological role, catalyzes the GTP-dependent successive addition of two or more gamma-linked L-glutamates to the L-lactyl phosphodiester of 7,8-didemethyl-8-hydroxy-5-deazariboflavin (F420-0) to form coenzyme F420-0-glutamyl-glutamate (F420-2) or polyglutamated F420 derivatives. This is Coenzyme F420:L-glutamate ligase from Methanococcus maripaludis (strain C6 / ATCC BAA-1332).